A 417-amino-acid chain; its full sequence is Gamma-glutamyl phosphate reductase (417 aa).

Belongs to the gamma-glutamyl phosphate reductase family.

It is found in the cytoplasm. It carries out the reaction L-glutamate 5-semialdehyde + phosphate + NADP(+) = L-glutamyl 5-phosphate + NADPH + H(+). The protein operates within amino-acid biosynthesis; L-proline biosynthesis; L-glutamate 5-semialdehyde from L-glutamate: step 2/2. Functionally, catalyzes the NADPH-dependent reduction of L-glutamate 5-phosphate into L-glutamate 5-semialdehyde and phosphate. The product spontaneously undergoes cyclization to form 1-pyrroline-5-carboxylate. This is Gamma-glutamyl phosphate reductase from Haemophilus influenzae (strain ATCC 51907 / DSM 11121 / KW20 / Rd).